A 699-amino-acid polypeptide reads, in one-letter code: eEF1A lysine and N-terminal methyltransferase (699 aa).

The residue at position 1 (Met-1) is an N-acetylmethionine. Ser-267 is subject to Phosphoserine. Residues 433–460 are disordered; it reads VSHRAQKKRKKDRKKHRPADTPEDLPAA. Residues 436-449 show a composition bias toward basic residues; it reads RAQKKRKKDRKKHR.

This sequence belongs to the methyltransferase superfamily. In terms of assembly, forms a tripartite complex containing GAB1, METTL13 and SPRY2. Within the complex interacts with GAB1 and SPRY2.

Its subcellular location is the cytoplasm. It localises to the nucleus. The protein resides in the mitochondrion. It carries out the reaction L-lysyl-[protein] + S-adenosyl-L-methionine = N(6)-methyl-L-lysyl-[protein] + S-adenosyl-L-homocysteine + H(+). It catalyses the reaction N(6)-methyl-L-lysyl-[protein] + S-adenosyl-L-methionine = N(6),N(6)-dimethyl-L-lysyl-[protein] + S-adenosyl-L-homocysteine + H(+). The catalysed reaction is N-terminal glycyl-L-lysyl-L-glutamyl-[protein] + 3 S-adenosyl-L-methionine = N-terminal N,N,N-trimethyl-glycyl-L-lysyl-L-glutamyl-[protein] + 3 S-adenosyl-L-homocysteine + 3 H(+). Its function is as follows. Dual methyltransferase that catalyzes methylation of elongation factor 1-alpha (EEF1A1 and EEF1A2) at two different positions, and is therefore involved in the regulation of mRNA translation. Via its C-terminus, methylates EEF1A1 and EEF1A2 at the N-terminal residue 'Gly-2'. Via its N-terminus dimethylates EEF1A1 and EEF1A2 at residue 'Lys-55'. Has no activity towards core histones H2A, H2B, H3 and H4. The sequence is that of eEF1A lysine and N-terminal methyltransferase (METTL13) from Bos taurus (Bovine).